Here is a 710-residue protein sequence, read N- to C-terminus: Polyribonucleotide nucleotidyltransferase (710 aa).

Mg(2+)-binding residues include Asp-489 and Asp-495. The KH domain maps to 556–615 (PKIDTIKIDVDKIKVVIGKGGETIDKIIAETGVKIDIDDEGNVSIYSSDQAAINRTKEII). The 69-residue stretch at 625-693 (GEVYHAKVVR…EKGRVDASMK (69 aa)) folds into the S1 motif domain. The tract at residues 691–710 (SMKALIPRPPKPEKKEEKHD) is disordered. Over residues 700–710 (PKPEKKEEKHD) the composition is skewed to basic and acidic residues.

Mg(2+) serves as cofactor.

It localises to the cytoplasm. The enzyme catalyses RNA(n+1) + phosphate = RNA(n) + a ribonucleoside 5'-diphosphate. Involved in mRNA degradation. Catalyzes the phosphorolysis of single-stranded polyribonucleotides processively in the 3'- to 5'-direction. The sequence is that of Polyribonucleotide nucleotidyltransferase from Streptococcus pyogenes serotype M6 (strain ATCC BAA-946 / MGAS10394).